We begin with the raw amino-acid sequence, 334 residues long: Tyrosine-protein kinase SRK3 (334 aa).

Residues isoleucine 1–cysteine 42 form the SH2 domain. A Protein kinase domain is found at isoleucine 66–valine 321. Residues leucine 72–valine 80 and lysine 94 contribute to the ATP site. The active-site Proton acceptor is aspartate 186.

It belongs to the protein kinase superfamily. Tyr protein kinase family.

It localises to the cytoplasm. The catalysed reaction is L-tyrosyl-[protein] + ATP = O-phospho-L-tyrosyl-[protein] + ADP + H(+). The polypeptide is Tyrosine-protein kinase SRK3 (SRK3) (Spongilla lacustris (Freshwater sponge)).